We begin with the raw amino-acid sequence, 122 residues long: Small ribosomal subunit protein uS12 (122 aa).

Belongs to the universal ribosomal protein uS12 family. Part of the 30S ribosomal subunit. Contacts proteins S8 and S17. May interact with IF1 in the 30S initiation complex.

With S4 and S5 plays an important role in translational accuracy. In terms of biological role, interacts with and stabilizes bases of the 16S rRNA that are involved in tRNA selection in the A site and with the mRNA backbone. Located at the interface of the 30S and 50S subunits, it traverses the body of the 30S subunit contacting proteins on the other side and probably holding the rRNA structure together. The combined cluster of proteins S8, S12 and S17 appears to hold together the shoulder and platform of the 30S subunit. The polypeptide is Small ribosomal subunit protein uS12 (Corynebacterium efficiens (strain DSM 44549 / YS-314 / AJ 12310 / JCM 11189 / NBRC 100395)).